The primary structure comprises 260 residues: Indole-3-glycerol phosphate synthase (260 aa).

This sequence belongs to the TrpC family.

The catalysed reaction is 1-(2-carboxyphenylamino)-1-deoxy-D-ribulose 5-phosphate + H(+) = (1S,2R)-1-C-(indol-3-yl)glycerol 3-phosphate + CO2 + H2O. It participates in amino-acid biosynthesis; L-tryptophan biosynthesis; L-tryptophan from chorismate: step 4/5. This is Indole-3-glycerol phosphate synthase from Lactiplantibacillus plantarum (strain ATCC BAA-793 / NCIMB 8826 / WCFS1) (Lactobacillus plantarum).